Consider the following 186-residue polypeptide: Transcription factor FapR (186 aa).

It belongs to the FapR family.

Functionally, transcriptional factor involved in regulation of membrane lipid biosynthesis by repressing genes involved in fatty acid and phospholipid metabolism. The polypeptide is Transcription factor FapR (Halalkalibacterium halodurans (strain ATCC BAA-125 / DSM 18197 / FERM 7344 / JCM 9153 / C-125) (Bacillus halodurans)).